Consider the following 365-residue polypeptide: Aminomethyltransferase (365 aa).

It belongs to the GcvT family. In terms of assembly, the glycine cleavage system is composed of four proteins: P, T, L and H.

It catalyses the reaction N(6)-[(R)-S(8)-aminomethyldihydrolipoyl]-L-lysyl-[protein] + (6S)-5,6,7,8-tetrahydrofolate = N(6)-[(R)-dihydrolipoyl]-L-lysyl-[protein] + (6R)-5,10-methylene-5,6,7,8-tetrahydrofolate + NH4(+). The glycine cleavage system catalyzes the degradation of glycine. The polypeptide is Aminomethyltransferase (Bacillus pumilus (strain SAFR-032)).